The primary structure comprises 184 residues: MNWRSERIWIEFLRGSRKISNFCWAFILFLGSLGFLLVGTSSYLGRDLISLFPSQQIIFFPQGIVMSFYGIAGLFISSYLWCTILWNVGSGYDRFDRKEEIVSIFRWGFPGKNRRIFLRFLMKDIQSIRIEVKEGIYARRVLYMEIRGQGAIPLTRTDQNLTPREIEQKAAELAYFLRVPIEVF.

A run of 2 helical transmembrane segments spans residues 19 to 39 and 57 to 77; these read ISNFCWAFILFLGSLGFLLVG and IIFFPQGIVMSFYGIAGLFIS.

It belongs to the Ycf4 family.

It is found in the plastid. It localises to the chloroplast thylakoid membrane. In terms of biological role, seems to be required for the assembly of the photosystem I complex. The protein is Photosystem I assembly protein Ycf4 of Cucumis sativus (Cucumber).